A 206-amino-acid chain; its full sequence is LexA repressor (206 aa).

A DNA-binding region (H-T-H motif) is located at residues R28–K48. Catalysis depends on for autocatalytic cleavage activity residues S123 and K160.

This sequence belongs to the peptidase S24 family. Homodimer.

It catalyses the reaction Hydrolysis of Ala-|-Gly bond in repressor LexA.. Represses a number of genes involved in the response to DNA damage (SOS response), including recA and lexA. In the presence of single-stranded DNA, RecA interacts with LexA causing an autocatalytic cleavage which disrupts the DNA-binding part of LexA, leading to derepression of the SOS regulon and eventually DNA repair. The sequence is that of LexA repressor from Vibrio parahaemolyticus serotype O3:K6 (strain RIMD 2210633).